The sequence spans 309 residues: Porphobilinogen deaminase (309 aa).

Position 241 is an S-(dipyrrolylmethanemethyl)cysteine (cysteine 241).

This sequence belongs to the HMBS family. In terms of assembly, monomer. Dipyrromethane serves as cofactor.

The catalysed reaction is 4 porphobilinogen + H2O = hydroxymethylbilane + 4 NH4(+). Its pathway is porphyrin-containing compound metabolism; protoporphyrin-IX biosynthesis; coproporphyrinogen-III from 5-aminolevulinate: step 2/4. In terms of biological role, tetrapolymerization of the monopyrrole PBG into the hydroxymethylbilane pre-uroporphyrinogen in several discrete steps. This chain is Porphobilinogen deaminase, found in Campylobacter concisus (strain 13826).